A 749-amino-acid chain; its full sequence is MSTTIIGFPRLGEFRELKFTTEKYFRKEISEEELLAAAKDLRAKHWNIVKEKGITEIPSNDFSHYDNFLDAAFLFNVVPASVQNLDLSDLERYFALGRGYQGEKGDVRALPMKKWFNTNYHYIVPKFEKDTQVKLAGHKIFDEFQEAKELGLNTRPVLVGPFTFLQLSDFEEGVKADDFVDSLVAAYQEVFAKLAELGATRIQLDEAALVKDLTAEEKALFLNLYNKLLADKKGLEVLLQTYFGDVRDVYADLVNLPVDAIGLDFVEGKKTLELVKGGFPADKTLYVGIVNGKNIWRNNYEKSLAVLEQIPAENIVLTSSCSLLHVPFTTANEEFEPALLNHFAFAVEKLDEIRDLDAIRNGQGSEALAANKELFATERVGENAELRARIAGLTDADYTRLPAFAEREAIQEEAFKLPALPTTTIGSFPQTKEVRAKRLAYRKGELSQKEYDAFLAETIDEWIKWQEDIDFDVLVHGEFERNDMVEYFGQNLSGYLFSKNGWVQSYGMRGVKPPIIWGDVTRLNPITVKWSSYAQSRTNKPVKGMLTGPVTILNWSFPREDISIKDSTLQIALAIKDEVLDLEAAGVKIIQIDEAALREKLPLRRSDWYEDYLDWAIPAFRLVHSTVAPDTQIHTHMCYSEFTDIIPAIDNMDADVISFEANRSNLEILDELKAKNFQTEVGPGVYDIHSPRVPNEGEIDNTIEAILAKVPSKKVWINPDCGLKTRGIPETKESLIRLVEAAKAAREKL.

Residues 15-18 (RELK) and lysine 114 each bind 5-methyltetrahydropteroyltri-L-glutamate. L-homocysteine-binding positions include 425–427 (IGS) and glutamate 478. L-methionine-binding positions include 425–427 (IGS) and glutamate 478. Tryptophan 555 serves as a coordination point for 5-methyltetrahydropteroyltri-L-glutamate. An L-homocysteine-binding site is contributed by aspartate 593. Aspartate 593 contributes to the L-methionine binding site. Glutamate 599 contacts 5-methyltetrahydropteroyltri-L-glutamate. The Zn(2+) site is built by histidine 636, cysteine 638, and glutamate 660. The active-site Proton donor is the histidine 689. Cysteine 721 provides a ligand contact to Zn(2+).

Belongs to the vitamin-B12 independent methionine synthase family. The cofactor is Zn(2+).

It carries out the reaction 5-methyltetrahydropteroyltri-L-glutamate + L-homocysteine = tetrahydropteroyltri-L-glutamate + L-methionine. The protein operates within amino-acid biosynthesis; L-methionine biosynthesis via de novo pathway; L-methionine from L-homocysteine (MetE route): step 1/1. Functionally, catalyzes the transfer of a methyl group from 5-methyltetrahydrofolate to homocysteine resulting in methionine formation. The polypeptide is 5-methyltetrahydropteroyltriglutamate--homocysteine methyltransferase (Streptococcus pneumoniae serotype 4 (strain ATCC BAA-334 / TIGR4)).